A 279-amino-acid chain; its full sequence is 4-deoxy-L-threo-5-hexosulose-uronate ketol-isomerase (279 aa).

Positions 197, 199, 204, and 246 each coordinate Zn(2+).

It belongs to the KduI family. Requires Zn(2+) as cofactor.

It carries out the reaction 5-dehydro-4-deoxy-D-glucuronate = 3-deoxy-D-glycero-2,5-hexodiulosonate. It participates in glycan metabolism; pectin degradation; 2-dehydro-3-deoxy-D-gluconate from pectin: step 4/5. Its function is as follows. Catalyzes the isomerization of 5-dehydro-4-deoxy-D-glucuronate to 3-deoxy-D-glycero-2,5-hexodiulosonate. This is 4-deoxy-L-threo-5-hexosulose-uronate ketol-isomerase from Kineococcus radiotolerans (strain ATCC BAA-149 / DSM 14245 / SRS30216).